The primary structure comprises 109 residues: ATPase inhibitor mai-2, mitochondrial (109 aa).

Disordered regions lie at residues 17–39 (RFST…SIRD) and 73–95 (QEVD…HQKR). A compositionally biased stretch (gly residues) spans 21-35 (GGHGDGAGRGGGSGG). Positions 45–109 (GKMEAAREDE…EAEERALGKE (65 aa)) form a coiled coil.

The protein belongs to the ATPase inhibitor family.

The protein localises to the mitochondrion. In terms of biological role, thought to be a regulatory component of the ATP-synthesizing complex in the mitochondria. This is ATPase inhibitor mai-2, mitochondrial from Caenorhabditis briggsae.